A 180-amino-acid chain; its full sequence is UPF0134 protein MPN_127 (180 aa).

This sequence belongs to the UPF0134 family.

This chain is UPF0134 protein MPN_127, found in Mycoplasma pneumoniae (strain ATCC 29342 / M129 / Subtype 1) (Mycoplasmoides pneumoniae).